The chain runs to 339 residues: Dihydroorotate dehydrogenase (quinone) (339 aa).

FMN contacts are provided by residues 64–68 and Thr88; that span reads AGADK. Residue Lys68 participates in substrate binding. 113–117 lines the substrate pocket; it reads NRNGF. 2 residues coordinate FMN: Asn141 and Asn174. Asn174 contacts substrate. Ser177 acts as the Nucleophile in catalysis. Asn179 is a substrate binding site. FMN-binding residues include Lys219 and Thr247. 248 to 249 provides a ligand contact to substrate; that stretch reads NT. FMN is bound by residues Gly270, Gly299, and 320–321; that span reads YS.

This sequence belongs to the dihydroorotate dehydrogenase family. Type 2 subfamily. As to quaternary structure, monomer. FMN serves as cofactor.

The protein localises to the cell membrane. It catalyses the reaction (S)-dihydroorotate + a quinone = orotate + a quinol. Its pathway is pyrimidine metabolism; UMP biosynthesis via de novo pathway; orotate from (S)-dihydroorotate (quinone route): step 1/1. In terms of biological role, catalyzes the conversion of dihydroorotate to orotate with quinone as electron acceptor. This chain is Dihydroorotate dehydrogenase (quinone), found in Haemophilus influenzae (strain 86-028NP).